We begin with the raw amino-acid sequence, 481 residues long: Protein NRT1/ PTR FAMILY 1.3 (481 aa).

The next 12 membrane-spanning stretches (helical) occupy residues 32 to 52, 57 to 77, 88 to 108, 124 to 144, 173 to 193, 202 to 222, 259 to 279, 302 to 322, 333 to 353, 374 to 394, 422 to 442, and 451 to 471; these read LAYF…YGMG, ANIL…GAFI, IGFG…TTII, LLKS…AGGV, FNWY…LLVF, IGFG…FAAS, IWST…FIVL, IFLV…IVPL, LGVM…ISAL, AMWL…NTIA, ASLI…GSWI, and LDYY…YFVW.

The protein belongs to the major facilitator superfamily. Proton-dependent oligopeptide transporter (POT/PTR) (TC 2.A.17) family. Expressed in roots.

The protein localises to the membrane. In Arabidopsis thaliana (Mouse-ear cress), this protein is Protein NRT1/ PTR FAMILY 1.3 (NPF1.3).